Consider the following 242-residue polypeptide: Ras-like protein family member 11A (242 aa).

Residues 17–241 are small GTPase-like; sequence ESSSDYLLPK…SSKAKASSAL (225 aa). GTP is bound by residues 34–41, 81–88, and 147–150; these read GAGCVGKS, DTPGGIQA, and NKGD.

The protein belongs to the small GTPase superfamily. Ras family. As to quaternary structure, interacts with UBF/UBTF.

The protein localises to the nucleus. It localises to the nucleolus. The enzyme catalyses GTP + H2O = GDP + phosphate + H(+). In terms of biological role, regulator of rDNA transcription. Acts in cooperation UBF/UBTF and positively regulates RNA polymerase I transcription. This Mus musculus (Mouse) protein is Ras-like protein family member 11A.